The following is a 146-amino-acid chain: Small ribosomal subunit protein bS16 (146 aa).

The interval 119 to 146 (GSENKGGKSKKAEEKSAEKTAEKSEGEA) is disordered. Residues 128–146 (KKAEEKSAEKTAEKSEGEA) show a composition bias toward basic and acidic residues.

Belongs to the bacterial ribosomal protein bS16 family.

The polypeptide is Small ribosomal subunit protein bS16 (Thermobifida fusca (strain YX)).